A 112-amino-acid polypeptide reads, in one-letter code: Nitrogen regulatory protein GlnK1 (112 aa).

T29 provides a ligand contact to ADP. 2 residues coordinate ATP: T29 and V38. 52–54 (IVD) contacts 2-oxoglutarate. ADP-binding positions include V64, 88-90 (DGK), and 101-103 (RVR). ATP contacts are provided by residues V64, 86–90 (PGDGK), and 101–103 (RVR).

It belongs to the P(II) protein family. As to quaternary structure, homotrimer. Interacts and forms a complex with Amt1.

The protein localises to the cytoplasm. With respect to regulation, formation of the GlnK1/Amt1 complex is decreased in the presence of Mg-ATP or 2-oxoglutarate. The presence of both effectors abolishes the formation of the complex. Involved in the regulation of nitrogen metabolism. Regulates the activity of its targets by protein-protein interaction in response to the nitrogen status of the cell. Regulates the activity of the ammonia channel Amt1 via direct interaction. This chain is Nitrogen regulatory protein GlnK1, found in Methanocaldococcus jannaschii (strain ATCC 43067 / DSM 2661 / JAL-1 / JCM 10045 / NBRC 100440) (Methanococcus jannaschii).